Consider the following 194-residue polypeptide: Fe/S biogenesis protein NfuA (194 aa).

[4Fe-4S] cluster contacts are provided by C152 and C155.

Belongs to the NfuA family. In terms of assembly, homodimer. The cofactor is [4Fe-4S] cluster.

In terms of biological role, involved in iron-sulfur cluster biogenesis. Binds a 4Fe-4S cluster, can transfer this cluster to apoproteins, and thereby intervenes in the maturation of Fe/S proteins. Could also act as a scaffold/chaperone for damaged Fe/S proteins. This is Fe/S biogenesis protein NfuA from Ectopseudomonas mendocina (strain ymp) (Pseudomonas mendocina).